A 348-amino-acid chain; its full sequence is GTPase Obg (348 aa).

An Obg domain is found at 1 to 160; the sequence is MHFLDQAKIF…MWVWLRLKLL (160 aa). The disordered stretch occupies residues 120 to 145; the sequence is RGGDGGRGNASYKTSTNRAPRQHGPG. The OBG-type G domain occupies 161–328; it reads ADAGLVGLPN…VLDKLLEAIG (168 aa). GTP-binding positions include 167-174, 192-196, 213-216, 280-283, and 309-311; these read GLPNAGKS, FTTLR, DIPG, NKID, and SGA. 2 residues coordinate Mg(2+): Ser174 and Thr194. Residues 326 to 348 form a disordered region; sequence AIGQPEPGPDADEEEKGGDWSPI.

It belongs to the TRAFAC class OBG-HflX-like GTPase superfamily. OBG GTPase family. In terms of assembly, monomer. Mg(2+) is required as a cofactor.

The protein localises to the cytoplasm. Its function is as follows. An essential GTPase which binds GTP, GDP and possibly (p)ppGpp with moderate affinity, with high nucleotide exchange rates and a fairly low GTP hydrolysis rate. Plays a role in control of the cell cycle, stress response, ribosome biogenesis and in those bacteria that undergo differentiation, in morphogenesis control. The sequence is that of GTPase Obg from Sphingopyxis alaskensis (strain DSM 13593 / LMG 18877 / RB2256) (Sphingomonas alaskensis).